The primary structure comprises 1275 residues: Myosin-1 (1275 aa).

One can recognise a Myosin motor domain in the interval 35-727 (VGVSDLTLLS…TLFAMEDMRD (693 aa)). 128–135 (GESGAGKT) contributes to the ATP binding site. Residue S361 is modified to Phosphoserine. Residues 410–493 (TIGILDIYGF…PGLFAALNDS (84 aa)) are actin-binding. IQ domains are found at residues 731–751 (HNMAARIQRAWRRYVKRKEDA) and 752–777 (ARLIQNAWKVKKHGNQFEQLRDYGNG). The region spanning 785 to 974 (RRRMSMLGSR…KSGTVSVRPG (190 aa)) is the TH1 domain. 4 disordered regions span residues 966–1064 (SGTV…LNNN), 1089–1128 (QNHNSNPTAPSRPAKKAAPAPPVKKTAPPPPPSLSAAKPK), 1183–1230 (SECP…GGLS), and 1251–1275 (IADALKKRSATRDSDDEEEDDDDDW). The span at 977–992 (PDSQNPKRPRATSSKV) shows a compositional bias: polar residues. Residues 1095-1106 (PTAPSRPAKKAA) show a composition bias toward low complexity. Pro residues predominate over residues 1107–1121 (PAPPVKKTAPPPPPS). One can recognise an SH3 domain in the interval 1127 to 1187 (PKWPTFKANY…PTAYISECPP (61 aa)). Positions 1254–1263 (ALKKRSATRD) are enriched in basic and acidic residues. Residues 1264-1275 (SDDEEEDDDDDW) are compositionally biased toward acidic residues.

This sequence belongs to the TRAFAC class myosin-kinesin ATPase superfamily. Myosin family. Post-translationally, phosphorylation of the TEDS site (Ser-361) is required for the polarization of the actin cytoskeleton. Phosphorylation probably activates the myosin-I ATPase activity.

The protein resides in the cytoplasm. Its subcellular location is the cytoskeleton. It is found in the actin patch. Type-I myosin implicated in the organization of the actin cytoskeleton. Required for proper actin cytoskeleton polarization. At the cell cortex, assembles in patch-like structures together with proteins from the actin-polymerizing machinery and promotes actin assembly. Functions as actin nucleation-promoting factor (NPF) for the Arp2/3 complex. This is Myosin-1 (MYO1) from Meyerozyma guilliermondii (strain ATCC 6260 / CBS 566 / DSM 6381 / JCM 1539 / NBRC 10279 / NRRL Y-324) (Yeast).